Consider the following 441-residue polypeptide: ATP-dependent protease ATPase subunit HslU (441 aa).

ATP contacts are provided by residues valine 18, glycine 60 to glutamate 65, aspartate 253, glutamate 319, and arginine 391.

It belongs to the ClpX chaperone family. HslU subfamily. In terms of assembly, a double ring-shaped homohexamer of HslV is capped on each side by a ring-shaped HslU homohexamer. The assembly of the HslU/HslV complex is dependent on binding of ATP.

It is found in the cytoplasm. In terms of biological role, ATPase subunit of a proteasome-like degradation complex; this subunit has chaperone activity. The binding of ATP and its subsequent hydrolysis by HslU are essential for unfolding of protein substrates subsequently hydrolyzed by HslV. HslU recognizes the N-terminal part of its protein substrates and unfolds these before they are guided to HslV for hydrolysis. The sequence is that of ATP-dependent protease ATPase subunit HslU from Nitratidesulfovibrio vulgaris (strain DP4) (Desulfovibrio vulgaris).